Reading from the N-terminus, the 119-residue chain is uncharacterized protein (119 aa).

The protein localises to the mitochondrion. It localises to the nucleus. This is an uncharacterized protein from Schizosaccharomyces pombe (strain 972 / ATCC 24843) (Fission yeast).